The sequence spans 273 residues: MARLLTTCCLLALLLAACTDVALSKKGKGKPSGGGWGAGSHRQPSYPRQPGYPHNPGYPHNPGYPHNPGYPHNPGYPHNPGYPQNPGYPHNPGYPGWGQGYNPSSGGSYHNQKPWKPPKTNFKHVAGAAAAGAVVGGLGGYAMGRVMSGMNYHFDSPDEYRWWSENSARYPNRVYYRDYSSPVPQDVFVADCFNITVTEYSIGPAAKKNTSEAVAAANQTEVEMENKVVTKVIREMCVQQYREYRLASGIQLHPADTWLAVLLLLLTTLFAMH.

The signal sequence occupies residues 1–24 (MARLLTTCCLLALLLAACTDVALS). Residues 25–121 (KKGKGKPSGG…QKPWKPPKTN (97 aa)) are disordered. Tandem repeats lie at residues 42–47 (RQPSYP), 48–53 (RQPGYP), 54–59 (HNPGYP), 60–65 (HNPGYP), 66–71 (HNPGYP), 72–77 (HNPGYP), 78–83 (HNPGYP), and 84–89 (QNPGYP). Residues 42–89 (RQPSYPRQPGYPHNPGYPHNPGYPHNPGYPHNPGYPHNPGYPQNPGYP) form an 8 X 6 AA tandem repeats of [HR]-[NQ]-P-G-Y-P region. Low complexity predominate over residues 51 to 94 (GYPHNPGYPHNPGYPHNPGYPHNPGYPHNPGYPQNPGYPHNPGY). Cu(2+) contacts are provided by H66, H72, and H78. Residues H90 and G93 each coordinate Cu(2+). Positions 101–111 (YNPSSGGSYHN) are enriched in polar residues. An intrachain disulfide couples C192 to C237. Residues N194, N209, and N218 are each glycosylated (N-linked (GlcNAc...) asparagine). Residue S248 is the site of GPI-anchor amidated serine attachment. Positions 249 to 273 (GIQLHPADTWLAVLLLLLTTLFAMH) are cleaved as a propeptide — removed in mature form.

It belongs to the prion family. As to quaternary structure, monomer and homodimer. Has a tendency to aggregate into amyloid fibrils containing a cross-beta spine, formed by a steric zipper of superposed beta-strands. Soluble oligomers may represent an intermediate stage on the path to fibril formation. Copper binding may promote oligomerization. In terms of tissue distribution, spinal cord and brain.

It localises to the cell membrane. Functionally, its primary physiological function is unclear. Has cytoprotective activity against internal or environmental stresses. May play a role in neuronal development and synaptic plasticity. May be required for neuronal myelin sheath maintenance. May play a role in iron uptake and iron homeostasis. Soluble oligomers are toxic to cultured neuroblastoma cells and induce apoptosis (in vitro). Association with GPC1 (via its heparan sulfate chains) targets PRNP to lipid rafts. Also provides Cu(2+) or Zn(2+) for the ascorbate-mediated GPC1 deaminase degradation of its heparan sulfate side chains. This Gallus gallus (Chicken) protein is Major prion protein homolog (PRNP).